An 85-amino-acid chain; its full sequence is Large ribosomal subunit protein bL27 (85 aa).

Residues 1 to 21 are disordered; that stretch reads MAHKKGVGSSRNGRDSDGQRL.

Belongs to the bacterial ribosomal protein bL27 family.

In Citrifermentans bemidjiense (strain ATCC BAA-1014 / DSM 16622 / JCM 12645 / Bem) (Geobacter bemidjiensis), this protein is Large ribosomal subunit protein bL27.